Reading from the N-terminus, the 682-residue chain is MSRKQLALFEPTLVVQALKEAVKKLNPQAQWRNPVMFIVWIGSLLTTCISIAMASGAMPGNALFSAAISGWLWVTVLFANFAEALAEGRSKAQANSLKGVKKTAFARKLREPKYGAAADKVPADQLRKGDIVLVEAGDIIPCDGEVIEGGASVDESAITGESAPVIRESGGDFASVTGGTRILSDWLVIECSVNPGETFLDRMIAMVEGAQRRKTPNEIALTILLIALTIVFLLATATLWPFSAWGGNAVSVTVLVALLVCLIPTTIGGLLSAIGVAGMSRMLGANVIATSGRAVEAAGDVDVLLLDKTGTITLGNRQASEFIPAQGVDEKTLADAAQLASLADETPEGRSIVILAKQRFNLRERDVQSLHATFVPFTAQSRMSGINIDNRMIRKGSVDAIRRHVEANGGHFPTDVDQKVDQVARQGATPLVVVEGSRVLGVIALKDIVKGGIKERFAQLRKMGIKTVMITGDNRLTAAAIAAEAGVDDFLAEATPEAKLALIRQYQAEGRLVAMTGDGTNDAPALAQADVAVAMNSGTQAAKEAGNMVDLDSNPTKLIEVVHIGKQMLMTRGSLTTFSIANDVAKYFAIIPAAFAATYPQLNALNIMRLHSPDSAILSAVIFNALIIVFLIPLALKGVSYKPLTASAMLRRNLWIYGLGGLLVPFIGIKVIDLLLTVCGLV.

4 helical membrane passes run Pro34–Ala54, Ala62–Ala82, Ile219–Leu239, and Val254–Ile274. Asp307 serves as the catalytic 4-aspartylphosphate intermediate. Residues Asp344, Glu348, Phe377–Ser384, and Lys395 contribute to the ATP site. Mg(2+) is bound by residues Asp518 and Asp522. The next 3 helical transmembrane spans lie at Phe588–Met608, Ala616–Leu636, and Ile656–Leu676.

The protein belongs to the cation transport ATPase (P-type) (TC 3.A.3) family. Type IA subfamily. In terms of assembly, the system is composed of three essential subunits: KdpA, KdpB and KdpC.

It localises to the cell inner membrane. It catalyses the reaction K(+)(out) + ATP + H2O = K(+)(in) + ADP + phosphate + H(+). Functionally, part of the high-affinity ATP-driven potassium transport (or Kdp) system, which catalyzes the hydrolysis of ATP coupled with the electrogenic transport of potassium into the cytoplasm. This subunit is responsible for energy coupling to the transport system and for the release of the potassium ions to the cytoplasm. The sequence is that of Potassium-transporting ATPase ATP-binding subunit from Escherichia coli O139:H28 (strain E24377A / ETEC).